Consider the following 352-residue polypeptide: Guanidino acid hydrolase, mitochondrial (352 aa).

Residues 1 to 35 (MLRLLASGCARGPGPGVGARPAAGLFHPGRRQSRQ) constitute a mitochondrion transit peptide. The tract at residues 11–49 (RGPGPGVGARPAAGLFHPGRRQSRQASDAPRNQPPSPEF) is disordered. Mn(2+)-binding residues include His162, Asp185, His187, and Asp189. An N6-acetyllysine modification is found at Lys193. Lys217 bears the N6-acetyllysine; alternate mark. At Lys217 the chain carries N6-succinyllysine; alternate. Asp276 and Asp278 together coordinate Mn(2+).

This sequence belongs to the ureohydrolase superfamily. Arginase family. It depends on Mn(2+) as a cofactor. Highly expressed in liver and kidney. Also found in skeletal muscle, fetal liver, brain, testis, skin and the gastrointestinal tract. Within brain, expression is higher in the cerebral cortex with lower levels in the medulla and spinal cord.

The protein resides in the mitochondrion. It catalyses the reaction 3-guanidinopropanoate + H2O = urea + beta-alanine. The catalysed reaction is 4-guanidinobutanoate + H2O = urea + 4-aminobutanoate. The enzyme catalyses taurocyamine + H2O = urea + taurine. It carries out the reaction L-arginine + H2O = urea + L-ornithine. It functions in the pathway nitrogen metabolism; urea cycle; L-ornithine and urea from L-arginine: step 1/1. Its function is as follows. Hydrolyzes linear guanidino acids to form urea and the corresponding amines. Displays specificity for substrates having a negatively charged head group and short chains including taurocyamine, guanidino propanoic and butanoic acids. May protect cells by detoxifying potentially harmful amounts of guanidino acids. Metabolizes L-arginine with low efficiency. This chain is Guanidino acid hydrolase, mitochondrial (AGMAT), found in Homo sapiens (Human).